A 581-amino-acid chain; its full sequence is Arginine--tRNA ligase (581 aa).

A 'HIGH' region motif is present at residues 126–136; the sequence is PNLAKEMHVGH.

This sequence belongs to the class-I aminoacyl-tRNA synthetase family. In terms of assembly, monomer.

It is found in the cytoplasm. The catalysed reaction is tRNA(Arg) + L-arginine + ATP = L-arginyl-tRNA(Arg) + AMP + diphosphate. The polypeptide is Arginine--tRNA ligase (Shewanella oneidensis (strain ATCC 700550 / JCM 31522 / CIP 106686 / LMG 19005 / NCIMB 14063 / MR-1)).